The following is a 368-amino-acid chain: Histidinol dehydrogenase (368 aa).

Residues Thr-197, Gln-218, and His-221 each coordinate substrate. Zn(2+) is bound by residues Gln-218 and His-221. Residues Glu-276 and His-277 each act as proton acceptor in the active site. The substrate site is built by His-277, Asp-306, Glu-358, and His-363. Residue Asp-306 participates in Zn(2+) binding. Residue His-363 coordinates Zn(2+).

This sequence belongs to the histidinol dehydrogenase family. Zn(2+) serves as cofactor.

It catalyses the reaction L-histidinol + 2 NAD(+) + H2O = L-histidine + 2 NADH + 3 H(+). It functions in the pathway amino-acid biosynthesis; L-histidine biosynthesis; L-histidine from 5-phospho-alpha-D-ribose 1-diphosphate: step 9/9. Functionally, catalyzes the sequential NAD-dependent oxidations of L-histidinol to L-histidinaldehyde and then to L-histidine. This chain is Histidinol dehydrogenase, found in Pyrobaculum aerophilum (strain ATCC 51768 / DSM 7523 / JCM 9630 / CIP 104966 / NBRC 100827 / IM2).